Here is a 219-residue protein sequence, read N- to C-terminus: Protein GrpE (219 aa).

2 disordered regions span residues M1–T32 and F59–T87.

This sequence belongs to the GrpE family. As to quaternary structure, homodimer.

The protein localises to the cytoplasm. Functionally, participates actively in the response to hyperosmotic and heat shock by preventing the aggregation of stress-denatured proteins, in association with DnaK and GrpE. It is the nucleotide exchange factor for DnaK and may function as a thermosensor. Unfolded proteins bind initially to DnaJ; upon interaction with the DnaJ-bound protein, DnaK hydrolyzes its bound ATP, resulting in the formation of a stable complex. GrpE releases ADP from DnaK; ATP binding to DnaK triggers the release of the substrate protein, thus completing the reaction cycle. Several rounds of ATP-dependent interactions between DnaJ, DnaK and GrpE are required for fully efficient folding. The chain is Protein GrpE from Corynebacterium diphtheriae (strain ATCC 700971 / NCTC 13129 / Biotype gravis).